Consider the following 161-residue polypeptide: SsrA-binding protein (161 aa).

The protein belongs to the SmpB family.

The protein resides in the cytoplasm. Its function is as follows. Required for rescue of stalled ribosomes mediated by trans-translation. Binds to transfer-messenger RNA (tmRNA), required for stable association of tmRNA with ribosomes. tmRNA and SmpB together mimic tRNA shape, replacing the anticodon stem-loop with SmpB. tmRNA is encoded by the ssrA gene; the 2 termini fold to resemble tRNA(Ala) and it encodes a 'tag peptide', a short internal open reading frame. During trans-translation Ala-aminoacylated tmRNA acts like a tRNA, entering the A-site of stalled ribosomes, displacing the stalled mRNA. The ribosome then switches to translate the ORF on the tmRNA; the nascent peptide is terminated with the 'tag peptide' encoded by the tmRNA and targeted for degradation. The ribosome is freed to recommence translation, which seems to be the essential function of trans-translation. In Vesicomyosocius okutanii subsp. Calyptogena okutanii (strain HA), this protein is SsrA-binding protein.